Reading from the N-terminus, the 223-residue chain is uncharacterized protein (223 aa).

The first 22 residues, 1–22, serve as a signal peptide directing secretion; it reads MHLKKALCPALCTFLIHLCLHA. Positions 30 to 204 constitute a VWFA domain; the sequence is DIFLMIDKSR…RSIAAAHSKR (175 aa). The tract at residues 199–223 is disordered; the sequence is AAHSKRPTPTPPAKESSPRYTPSLD.

This is an uncharacterized protein from Treponema pallidum (strain Nichols).